Reading from the N-terminus, the 289-residue chain is D-psicose 3-epimerase (289 aa).

2 residues coordinate substrate: tyrosine 6 and alanine 107. Glutamate 150 functions as the Proton donor/acceptor in the catalytic mechanism. Glutamate 150 contributes to the Mn(2+) binding site. Residues glutamate 156 and 183 to 186 each bind substrate; that span reads DTFH. The Mn(2+) site is built by aspartate 183 and histidine 209. Arginine 215 serves as a coordination point for substrate. The active-site Proton donor/acceptor is glutamate 244. Residue glutamate 244 coordinates Mn(2+).

It belongs to the hyi family. Homotetramer. Mn(2+) serves as cofactor. Co(2+) is required as a cofactor.

It catalyses the reaction D-allulose = keto-D-fructose. With respect to regulation, inhibited by Zn(2+) and Cu(2+). In terms of biological role, involved in the biosynthesis of D-psicose. Catalyzes the reversible epimerization of D-fructose at the C3 position to yield D-psicose. The enzyme is highly specific for D-psicose and shows very low activity with D-tagatose. The substrate specificity decreases in the following order: D-fructose, D-tagatose, D-ribulose, D-xylulose, and D-sorbose. It shows a higher level of activity for cis ketoses than for trans-ketoses. The polypeptide is D-psicose 3-epimerase (dpe) (Agrobacterium fabrum (strain C58 / ATCC 33970) (Agrobacterium tumefaciens (strain C58))).